Reading from the N-terminus, the 439-residue chain is Xaa-Pro dipeptidase (439 aa).

Positions 244, 255, 335, 380, and 418 each coordinate Mn(2+).

Belongs to the peptidase M24B family. Bacterial-type prolidase subfamily. The cofactor is Mn(2+).

It carries out the reaction Xaa-L-Pro dipeptide + H2O = an L-alpha-amino acid + L-proline. Splits dipeptides with a prolyl residue in the C-terminal position. In Shewanella frigidimarina (strain NCIMB 400), this protein is Xaa-Pro dipeptidase.